We begin with the raw amino-acid sequence, 178 residues long: Gamma-crystallin S (178 aa).

Serine 2 carries the N-acetylserine modification. The interval 2 to 5 is N-terminal arm; that stretch reads SKAG. 2 Beta/gamma crystallin 'Greek key' domains span residues 6 to 44 and 45 to 87; these read TKIT…RVEG and GTWA…RAVH. Residues 88–93 are connecting peptide; it reads LSSGGQ. Beta/gamma crystallin 'Greek key' domains follow at residues 94–134 and 135–177; these read YKLQ…KVLE and GAWI…RRIV.

It belongs to the beta/gamma-crystallin family. In terms of assembly, monomer.

Functionally, crystallins are the dominant structural components of the vertebrate eye lens. This Bos taurus (Bovine) protein is Gamma-crystallin S (CRYGS).